The following is a 698-amino-acid chain: UV radiation resistance-associated protein (698 aa).

Residues 1–10 (MSSCASLGGP) show a composition bias toward low complexity. The segment at 1 to 21 (MSSCASLGGPVPLPPPGPSAA) is disordered. Positions 23 to 149 (TSGAPARALH…YLGQQIHARN (127 aa)) constitute a C2 domain. Residues 199 to 268 (HRAQCAIKQT…REVAFLHKQQ (70 aa)) form a sufficient for interaction with STX7; VTI1B AND STX8 region. The stretch at 200–304 (RAQCAIKQTQ…LRKECTAKRE (105 aa)) forms a coiled coil. The interval 269–441 (MALQDKGSAF…IAQLRYQHGL (173 aa)) is sufficient for interaction with VPS16, required for interaction with CEP63. Positions 442 to 698 (GTPDLRQTLP…FRRPRRSSDK (257 aa)) are required for interaction with PRKDC, XRCC6 and XRCC5. 2 disordered regions span residues 477 to 551 (PKRQ…SSLD) and 565 to 586 (VDLG…EQGE). A Phosphoserine modification is found at serine 492. Serine 497 carries the post-translational modification Phosphoserine; by MTOR. Position 507 is a phosphoserine (serine 507). Phosphothreonine is present on threonine 517. Residues serine 521, serine 548, serine 549, serine 570, and serine 688 each carry the phosphoserine modification.

As to quaternary structure, component of the PI3K (PI3KC3/PI3K-III/class III phosphatidylinositol 3-kinase) complex II (PI3KC3-C2) in which the core composed of the catalytic subunit PIK3C3, the regulatory subunit PIK3R4 and BECN1 is associated with UVRAG; in the complex interacts directly with BECN1. PI3KC3-C2 can associate with further regulatory subunits such as RUBCN and probably SH3GLB1/Bif-1. Interacts with SH3GLB1; UVRAG bridges the interaction to BECN1 indicative for an association with the PI3K complex PI3KC3-C2. Interacts with RINT1. Associates with the NRZ complex under basal conditions and dissociates from it under autophagy conditions to associate with the PI3K complex; these complex associations seem to be mutually exclusive. Interacts with VPS16; VPS11; VPS18; VPS33 (VPS33A or VPS33B) and VPS39; indicative for an association with a class C Vps tethering complex (possibly the HOPS complex). Interacts with RAB7A; RAB7A competes with UVRAG for RUBCN binding. Interacts with STX7, VTI1B, STX8. Interacts with PRKDC, XRCC6 and XRCC5; indicative for an association with the DNA-dependent protein kinase complex DNA-PK. Interacts with CEP63. Directly interacts with FEZ1 and SCOC; the interaction with SCOC is reduced by amino acid starvation, but the complex is stabilized in the presence of FEZ1. Interacts with BECN1P1/BECN2. Interacts with SLAMF1. Interacts with RUBCNL/PACER; promoting targeting of UVRAG to autophagosome. Interacts with WNK1. In terms of processing, phosphorylated at Ser-497 by MTOR under basal conditions; increases the interaction with RUBCN implicated in inhibitory effect of RUBCN on PI3KC3 and decreases interaction with RAB7A, and VPS16 and VPS39 (indicative for a class C Vps complex, possibly the HOPS complex).

The protein localises to the late endosome. It localises to the lysosome. Its subcellular location is the cytoplasmic vesicle. The protein resides in the autophagosome. It is found in the early endosome. The protein localises to the endoplasmic reticulum. It localises to the midbody. Its subcellular location is the chromosome. The protein resides in the centromere. In terms of biological role, versatile protein that is involved in regulation of different cellular pathways implicated in membrane trafficking. Involved in regulation of the COPI-dependent retrograde transport from Golgi and the endoplasmic reticulum by associating with the NRZ complex; the function is dependent on its binding to phosphatidylinositol 3-phosphate (PtdIns(3)P). During autophagy acts as a regulatory subunit of the alternative PI3K complex II (PI3KC3-C2) that mediates formation of phosphatidylinositol 3-phosphate and is believed to be involved in maturation of autophagosomes and endocytosis. Activates lipid kinase activity of PIK3C3. Involved in the regulation of degradative endocytic trafficking and cytokinesis, and in regulation of ATG9A transport from the Golgi to the autophagosome; the functions seems to implicate its association with PI3KC3-C2. Involved in maturation of autophagosomes and degradative endocytic trafficking independently of BECN1 but depending on its association with a class C Vps complex (possibly the HOPS complex); the association is also proposed to promote autophagosome recruitment and activation of Rab7 and endosome-endosome fusion events. Enhances class C Vps complex (possibly HOPS complex) association with a SNARE complex and promotes fusogenic SNARE complex formation during late endocytic membrane fusion. In case of negative-strand RNA virus infection is required for efficient virus entry, promotes endocytic transport of virions and is implicated in a VAMP8-specific fusogenic SNARE complex assembly. Involved in maintaining chromosomal stability. Promotes DNA double-strand break (DSB) repair by association with DNA-dependent protein kinase complex DNA-PK and activating it in non-homologous end joining (NHEJ). Required for centrosome stability and proper chromosome segregation. This chain is UV radiation resistance-associated protein (Uvrag), found in Mus musculus (Mouse).